The chain runs to 466 residues: Chromosomal replication initiator protein DnaA (466 aa).

A domain I, interacts with DnaA modulators region spans residues 1–86 (MSLSLWQQCL…EVGTKPVTQT (86 aa)). A domain II region spans residues 86–129 (TLKTPVHNVVAPTQTTTAQPQRVAPAARSGWDNVPAPAEPTYRS). The tract at residues 130–346 (NVNVKHTFDN…GALNRVIANA (217 aa)) is domain III, AAA+ region. Residues glycine 174, glycine 176, lysine 177, and threonine 178 each coordinate ATP. The interval 347–466 (NFTGRAITID…FSNLIRTLSS (120 aa)) is domain IV, binds dsDNA.

The protein belongs to the DnaA family. In terms of assembly, oligomerizes as a right-handed, spiral filament on DNA at oriC.

It is found in the cytoplasm. Plays an essential role in the initiation and regulation of chromosomal replication. ATP-DnaA binds to the origin of replication (oriC) to initiate formation of the DNA replication initiation complex once per cell cycle. Binds the DnaA box (a 9 base pair repeat at the origin) and separates the double-stranded (ds)DNA. Forms a right-handed helical filament on oriC DNA; dsDNA binds to the exterior of the filament while single-stranded (ss)DNA is stabiized in the filament's interior. The ATP-DnaA-oriC complex binds and stabilizes one strand of the AT-rich DNA unwinding element (DUE), permitting loading of DNA polymerase. After initiation quickly degrades to an ADP-DnaA complex that is not apt for DNA replication. Binds acidic phospholipids. This is Chromosomal replication initiator protein DnaA from Salmonella gallinarum (strain 287/91 / NCTC 13346).